A 363-amino-acid polypeptide reads, in one-letter code: Isopentenyl-diphosphate delta-isomerase (363 aa).

15-16 (RK) contacts substrate. Residues Ser73, 74-76 (SMT), Ser104, and Asn133 each bind FMN. Substrate is bound at residue 104–106 (SMR). A substrate-binding site is contributed by Gln168. A Mg(2+)-binding site is contributed by Glu169. Residues Lys200, Thr230, and 313–314 (AG) each bind FMN.

Belongs to the IPP isomerase type 2 family. In terms of assembly, homooctamer. Dimer of tetramers. It depends on FMN as a cofactor. NADPH is required as a cofactor. The cofactor is Mg(2+).

It is found in the cytoplasm. It catalyses the reaction isopentenyl diphosphate = dimethylallyl diphosphate. Its function is as follows. Involved in the biosynthesis of isoprenoids. Catalyzes the 1,3-allylic rearrangement of the homoallylic substrate isopentenyl (IPP) to its allylic isomer, dimethylallyl diphosphate (DMAPP). This is Isopentenyl-diphosphate delta-isomerase from Chlorobium phaeobacteroides (strain DSM 266 / SMG 266 / 2430).